We begin with the raw amino-acid sequence, 432 residues long: Adenylosuccinate synthetase (432 aa).

Residues 13-19 (GDEGKGK) and 41-43 (GHT) each bind GTP. D14 serves as the catalytic Proton acceptor. Residues D14 and G41 each coordinate Mg(2+). IMP is bound by residues 14–17 (DEGK), 39–42 (NAGH), T130, R144, Q225, T240, and R304. Residue H42 is the Proton donor of the active site. A substrate-binding site is contributed by 300-306 (AVTGRPR). GTP-binding positions include R306, 332-334 (KLD), and 415-417 (STG).

The protein belongs to the adenylosuccinate synthetase family. As to quaternary structure, homodimer. Mg(2+) serves as cofactor.

It localises to the cytoplasm. It carries out the reaction IMP + L-aspartate + GTP = N(6)-(1,2-dicarboxyethyl)-AMP + GDP + phosphate + 2 H(+). The protein operates within purine metabolism; AMP biosynthesis via de novo pathway; AMP from IMP: step 1/2. Its function is as follows. Plays an important role in the de novo pathway of purine nucleotide biosynthesis. Catalyzes the first committed step in the biosynthesis of AMP from IMP. This chain is Adenylosuccinate synthetase, found in Mannheimia succiniciproducens (strain KCTC 0769BP / MBEL55E).